The sequence spans 126 residues: Acidic phospholipase A2 3 (126 aa).

Residues 1-7 constitute a propeptide that is removed on maturation; the sequence is SNRPMPL. Intrachain disulfides connect Cys18–Cys78, Cys33–Cys125, Cys35–Cys51, Cys50–Cys106, Cys57–Cys99, Cys67–Cys92, and Cys85–Cys97. 3 residues coordinate Ca(2+): Tyr34, Gly36, and Gly38. His54 is an active-site residue. Asp55 contributes to the Ca(2+) binding site. The active site involves Asp100.

This sequence belongs to the phospholipase A2 family. Group I subfamily. D49 sub-subfamily. Ca(2+) serves as cofactor. In terms of tissue distribution, expressed by the venom gland.

The protein resides in the secreted. It catalyses the reaction a 1,2-diacyl-sn-glycero-3-phosphocholine + H2O = a 1-acyl-sn-glycero-3-phosphocholine + a fatty acid + H(+). Functionally, PLA2 catalyzes the calcium-dependent hydrolysis of the 2-acyl groups in 3-sn-phosphoglycerides. In Naja sagittifera (Andaman cobra), this protein is Acidic phospholipase A2 3.